The sequence spans 210 residues: Orotate phosphoribosyltransferase (210 aa).

5-phospho-alpha-D-ribose 1-diphosphate contacts are provided by residues arginine 97, lysine 101, histidine 103, and glutamate 123–serine 131. An orotate-binding site is contributed by serine 127.

Belongs to the purine/pyrimidine phosphoribosyltransferase family. PyrE subfamily. In terms of assembly, homodimer. Requires Mg(2+) as cofactor.

The catalysed reaction is orotidine 5'-phosphate + diphosphate = orotate + 5-phospho-alpha-D-ribose 1-diphosphate. It participates in pyrimidine metabolism; UMP biosynthesis via de novo pathway; UMP from orotate: step 1/2. Its function is as follows. Catalyzes the transfer of a ribosyl phosphate group from 5-phosphoribose 1-diphosphate to orotate, leading to the formation of orotidine monophosphate (OMP). In Enterococcus faecalis (strain ATCC 700802 / V583), this protein is Orotate phosphoribosyltransferase.